A 330-amino-acid polypeptide reads, in one-letter code: T-cell leukemia homeobox protein 1 (330 aa).

Residues 186–207 (DRFTGHPYQNRTPPKKKKPRTS) are disordered. The homeobox DNA-binding region spans 201–260 (KKKPRTSFTRLQICELEKRFHRQKYLASAERAALAKALKMTDAQVKTWFQNRRTKWRRQT). An N6-acetyllysine modification is found at lysine 236.

In terms of assembly, interacts with MEIS1, MEIS2, PBX1, PBX2 and PBX3.

It is found in the nucleus. Controls the genesis of the spleen. Binds to the DNA sequence 5'-GGCGGTAAGTGG-3'. The protein is T-cell leukemia homeobox protein 1 (TLX1) of Homo sapiens (Human).